Consider the following 446-residue polypeptide: Sterile alpha motif domain-containing protein 7 (446 aa).

Positions 94-168 (HTARTEMEMY…NLQGNPMLAA (75 aa)) are required for localization to nuclear polycomb bodies. Disordered regions lie at residues 187 to 207 (NTGN…QAEE) and 225 to 277 (KDPD…AWDD). Over residues 232-249 (PSNQKSSETNEKPTTALA) the composition is skewed to polar residues. The SAM domain maps to 327 to 392 (WTVDDVHSFI…SQVSQHVGSM (66 aa)).

Monomer, homodimer and homooligomer. Component of a Polycomb group (PcG) multiprotein PRC1-like complex. Interacts with PHC2, NR2E3 and SAMD11. Interacts with RNF1 in a PHC2-dependent manner. Expressed in the retina (at protein level). Expressed in the retinal inner and outer nuclear layers.

It is found in the nucleus. The protein resides in the cytoplasm. In terms of biological role, component of a Polycomb group (PcG) multiprotein PRC1-like complex, essential for establishing rod photoreceptor cell identity and function by silencing nonrod gene expression in developing rod photoreceptor cells. Via its association with the PRC1-like complex, promotes epigenetic repressive marks H3K27me3 and H2AK119ub marks in nonrod genes, silencing their transcription. Represses Crx-controlled photoreceptor-specific gene expression. This Homo sapiens (Human) protein is Sterile alpha motif domain-containing protein 7 (SAMD7).